We begin with the raw amino-acid sequence, 237 residues long: HTH-type transcriptional regulator GmuR (237 aa).

One can recognise an HTH gntR-type domain in the interval 1–69; the sequence is MNKYEIIANE…RGHGTFIIQS (69 aa). Residues 29–48 constitute a DNA-binding region (H-T-H motif); sequence EVSLAKEFNSSRMTMKRALD.

Its subcellular location is the cytoplasm. In terms of biological role, transcriptional repressor of the gmuBACDREFG operon which is involved in the uptake and degradation of glucomannan. The chain is HTH-type transcriptional regulator GmuR (gmuR) from Bacillus subtilis (strain 168).